A 231-amino-acid polypeptide reads, in one-letter code: Putative N-acetylmannosamine-6-phosphate 2-epimerase (231 aa).

The protein belongs to the NanE family.

The catalysed reaction is an N-acyl-D-glucosamine 6-phosphate = an N-acyl-D-mannosamine 6-phosphate. It functions in the pathway amino-sugar metabolism; N-acetylneuraminate degradation; D-fructose 6-phosphate from N-acetylneuraminate: step 3/5. Converts N-acetylmannosamine-6-phosphate (ManNAc-6-P) to N-acetylglucosamine-6-phosphate (GlcNAc-6-P). This is Putative N-acetylmannosamine-6-phosphate 2-epimerase from Glaesserella parasuis serovar 5 (strain SH0165) (Haemophilus parasuis).